Reading from the N-terminus, the 473-residue chain is Adenosylhomocysteinase (473 aa).

3 residues coordinate substrate: Thr64, Asp139, and Glu199. 200-202 contacts NAD(+); sequence TTT. Substrate is bound by residues Lys229 and Asp233. Residues Asn234, 263–268, Glu286, Asn321, 342–344, and Asn387 contribute to the NAD(+) site; these read GYGDVG and IGH.

It belongs to the adenosylhomocysteinase family. Requires NAD(+) as cofactor.

It is found in the cytoplasm. The enzyme catalyses S-adenosyl-L-homocysteine + H2O = L-homocysteine + adenosine. Its pathway is amino-acid biosynthesis; L-homocysteine biosynthesis; L-homocysteine from S-adenosyl-L-homocysteine: step 1/1. May play a key role in the regulation of the intracellular concentration of adenosylhomocysteine. The chain is Adenosylhomocysteinase from Paraburkholderia xenovorans (strain LB400).